Reading from the N-terminus, the 389-residue chain is Aromatic-amino-acid aminotransferase 2 (389 aa).

Lys-233 bears the N6-(pyridoxal phosphate)lysine mark.

Belongs to the class-I pyridoxal-phosphate-dependent aminotransferase family. As to quaternary structure, homodimer. The cofactor is pyridoxal 5'-phosphate.

It carries out the reaction an aromatic L-alpha-amino acid + 2-oxoglutarate = an aromatic oxo-acid + L-glutamate. Catalyzes the transamination of phenylalanine, tyrosine and tryptophan. Shows virtually no activity towards aspartic acid, alanine, valine or isoleucine. This chain is Aromatic-amino-acid aminotransferase 2, found in Thermococcus litoralis (strain ATCC 51850 / DSM 5473 / JCM 8560 / NS-C).